A 404-amino-acid chain; its full sequence is Cysteine desulfurase IscS (404 aa).

Pyridoxal 5'-phosphate contacts are provided by residues 75-76 (AT), Asn-155, Gln-183, and 203-205 (SGH). At Lys-206 the chain carries N6-(pyridoxal phosphate)lysine. Thr-243 provides a ligand contact to pyridoxal 5'-phosphate. Residue Cys-328 is the Cysteine persulfide intermediate of the active site. Residue Cys-328 participates in [2Fe-2S] cluster binding.

The protein belongs to the class-V pyridoxal-phosphate-dependent aminotransferase family. NifS/IscS subfamily. In terms of assembly, homodimer. Forms a heterotetramer with IscU, interacts with other sulfur acceptors. Pyridoxal 5'-phosphate serves as cofactor.

The protein resides in the cytoplasm. The catalysed reaction is (sulfur carrier)-H + L-cysteine = (sulfur carrier)-SH + L-alanine. The protein operates within cofactor biosynthesis; iron-sulfur cluster biosynthesis. Its function is as follows. Master enzyme that delivers sulfur to a number of partners involved in Fe-S cluster assembly, tRNA modification or cofactor biosynthesis. Catalyzes the removal of elemental sulfur atoms from cysteine to produce alanine. Functions as a sulfur delivery protein for Fe-S cluster synthesis onto IscU, an Fe-S scaffold assembly protein, as well as other S acceptor proteins. This Serratia proteamaculans (strain 568) protein is Cysteine desulfurase IscS.